A 220-amino-acid polypeptide reads, in one-letter code: Splicing factor U2AF 26 kDa subunit (220 aa).

Alanine 2 is modified (N-acetylalanine). The segment at 12–40 (EKDKVNCSFYFKIGACRHGDRCSRLHNKP) adopts a C3H1-type 1 zinc-finger fold. One can recognise an RRM domain in the interval 65-147 (SHCHVSDVEV…QAVHAELSPV (83 aa)). A C3H1-type 2 zinc finger spans residues 149-176 (DFRESCCRQYEMGECTRGGFCNFMHLRP). Positions 186–220 (YGRGPRRRSPPRSHTGHRPRERNRRRSPDHRHGRF) are disordered. Positions 189-220 (GPRRRSPPRSHTGHRPRERNRRRSPDHRHGRF) are enriched in basic residues.

This sequence belongs to the splicing factor SR family. In terms of assembly, interacts with GFI1, U2AF2 and C1QBP.

It is found in the nucleus. The protein localises to the nucleus speckle. Its subcellular location is the cytoplasm. RNA-binding protein that function as a pre-mRNA splicing factor. Plays a critical role in both constitutive and enhancer-dependent splicing by mediating protein-protein interactions and protein-RNA interactions required for accurate 3'-splice site selection. Acts by enhancing the binding of U2AF2 to weak pyrimidine tracts. Also participates in the regulation of alternative pre-mRNA splicing. Activates exon 5 skipping of PTPRC during T-cell activation; an event reversed by GFI1. Binds to RNA at the AG dinucleotide at the 3'-splice site. Shows a preference for AGC or AGA. The chain is Splicing factor U2AF 26 kDa subunit (U2AF1L4) from Bos taurus (Bovine).